A 320-amino-acid chain; its full sequence is Variant surface glycoprotein ILTAT 1.2 (320 aa).

N-linked (GlcNAc...) asparagine glycosylation is found at N146, N282, and N295. The disordered stretch occupies residues 297-320 (TKATENGVPVAQTQTGGSETTTEK). Over residues 308 to 320 (QTQTGGSETTTEK) the composition is skewed to low complexity.

The protein localises to the cell membrane. Its function is as follows. VSG forms a coat on the surface of the parasite. The trypanosome evades the immune response of the host by expressing a series of antigenically distinct VSGs from an estimated 1000 VSG genes. This Trypanosoma brucei brucei protein is Variant surface glycoprotein ILTAT 1.2.